The following is a 435-amino-acid chain: Adenylosuccinate synthetase (435 aa).

GTP is bound by residues 11–17 (GDEGKGK) and 39–41 (GHT). Aspartate 12 serves as the catalytic Proton acceptor. Residues aspartate 12 and glycine 39 each coordinate Mg(2+). Residues 12 to 15 (DEGK), 37 to 40 (NAGH), threonine 128, arginine 142, glutamine 223, threonine 238, and arginine 302 contribute to the IMP site. The active-site Proton donor is histidine 40. Residue 298–304 (SVTGRPR) coordinates substrate. GTP contacts are provided by residues arginine 304, 330-332 (KLD), and 412-414 (STG).

The protein belongs to the adenylosuccinate synthetase family. As to quaternary structure, homodimer. It depends on Mg(2+) as a cofactor.

Its subcellular location is the cytoplasm. It catalyses the reaction IMP + L-aspartate + GTP = N(6)-(1,2-dicarboxyethyl)-AMP + GDP + phosphate + 2 H(+). Its pathway is purine metabolism; AMP biosynthesis via de novo pathway; AMP from IMP: step 1/2. Functionally, plays an important role in the de novo pathway of purine nucleotide biosynthesis. Catalyzes the first committed step in the biosynthesis of AMP from IMP. In Coxiella burnetii (strain CbuK_Q154) (Coxiella burnetii (strain Q154)), this protein is Adenylosuccinate synthetase.